Reading from the N-terminus, the 353-residue chain is F-box protein At3g58530 (353 aa).

Residues 8–56 (EEEEETWRREIVTSVMRLVSTRLPQTDLISLLLVSPWLYRTLISYPSIW) form the F-box; degenerate domain.

This chain is F-box protein At3g58530, found in Arabidopsis thaliana (Mouse-ear cress).